A 40-amino-acid chain; its full sequence is uncharacterized protein (40 aa).

Residues 20–37 (TYLYWTAVTAAYLTYLTI) traverse the membrane as a helical segment.

Its subcellular location is the membrane. This is an uncharacterized protein from Archaeoglobus fulgidus (strain ATCC 49558 / DSM 4304 / JCM 9628 / NBRC 100126 / VC-16).